Here is a 497-residue protein sequence, read N- to C-terminus: Glycerol kinase (497 aa).

Threonine 12 contacts ADP. ATP is bound by residues threonine 12, threonine 13, and serine 14. Residue threonine 12 participates in sn-glycerol 3-phosphate binding. Arginine 16 provides a ligand contact to ADP. 4 residues coordinate sn-glycerol 3-phosphate: arginine 82, glutamate 83, tyrosine 133, and aspartate 243. Positions 82, 83, 133, 243, and 244 each coordinate glycerol. Positions 265 and 308 each coordinate ADP. Threonine 265, glycine 308, glutamine 312, and glycine 409 together coordinate ATP. ADP is bound at residue glycine 409.

This sequence belongs to the FGGY kinase family.

It carries out the reaction glycerol + ATP = sn-glycerol 3-phosphate + ADP + H(+). Its pathway is polyol metabolism; glycerol degradation via glycerol kinase pathway; sn-glycerol 3-phosphate from glycerol: step 1/1. Its activity is regulated as follows. Inhibited by fructose 1,6-bisphosphate (FBP). Key enzyme in the regulation of glycerol uptake and metabolism. Catalyzes the phosphorylation of glycerol to yield sn-glycerol 3-phosphate. This Dichelobacter nodosus (strain VCS1703A) protein is Glycerol kinase.